Reading from the N-terminus, the 698-residue chain is Polyribonucleotide nucleotidyltransferase (698 aa).

Mg(2+) contacts are provided by D485 and D491. One can recognise a KH domain in the interval 552–612 (PRVEMMTIPE…SDLKGAKSIV (61 aa)). One can recognise an S1 motif domain in the interval 622–690 (GMVYDGTVKK…KLGRLNLSYV (69 aa)).

It belongs to the polyribonucleotide nucleotidyltransferase family. Requires Mg(2+) as cofactor.

The protein resides in the cytoplasm. It catalyses the reaction RNA(n+1) + phosphate = RNA(n) + a ribonucleoside 5'-diphosphate. Involved in mRNA degradation. Catalyzes the phosphorolysis of single-stranded polyribonucleotides processively in the 3'- to 5'-direction. This Treponema denticola (strain ATCC 35405 / DSM 14222 / CIP 103919 / JCM 8153 / KCTC 15104) protein is Polyribonucleotide nucleotidyltransferase.